The following is a 516-amino-acid chain: Glutamyl-tRNA(Gln) amidotransferase subunit B, mitochondrial (516 aa).

The protein belongs to the GatB/GatE family. GatB subfamily. Subunit of the heterotrimeric GatCAB amidotransferase (AdT) complex, composed of A, B and C subunits.

It is found in the mitochondrion. The enzyme catalyses L-glutamyl-tRNA(Gln) + L-glutamine + ATP + H2O = L-glutaminyl-tRNA(Gln) + L-glutamate + ADP + phosphate + H(+). Its function is as follows. Allows the formation of correctly charged Gln-tRNA(Gln) through the transamidation of misacylated Glu-tRNA(Gln) in the mitochondria. The reaction takes place in the presence of glutamine and ATP through an activated gamma-phospho-Glu-tRNA(Gln). The chain is Glutamyl-tRNA(Gln) amidotransferase subunit B, mitochondrial from Drosophila melanogaster (Fruit fly).